The following is a 322-amino-acid chain: Ribose-phosphate pyrophosphokinase 1 (322 aa).

ATP contacts are provided by residues 39 to 41 (DGE) and 98 to 99 (RQ). Positions 132 and 173 each coordinate Mg(2+). The active site involves K196. Residues R198, D224, and 228–232 (DTAGT) each bind D-ribose 5-phosphate.

Belongs to the ribose-phosphate pyrophosphokinase family. Class I subfamily. As to quaternary structure, homohexamer. Requires Mg(2+) as cofactor.

The protein resides in the cytoplasm. It catalyses the reaction D-ribose 5-phosphate + ATP = 5-phospho-alpha-D-ribose 1-diphosphate + AMP + H(+). The protein operates within metabolic intermediate biosynthesis; 5-phospho-alpha-D-ribose 1-diphosphate biosynthesis; 5-phospho-alpha-D-ribose 1-diphosphate from D-ribose 5-phosphate (route I): step 1/1. Involved in the biosynthesis of the central metabolite phospho-alpha-D-ribosyl-1-pyrophosphate (PRPP) via the transfer of pyrophosphoryl group from ATP to 1-hydroxyl of ribose-5-phosphate (Rib-5-P). This chain is Ribose-phosphate pyrophosphokinase 1, found in Streptococcus agalactiae serotype III (strain NEM316).